Consider the following 7059-residue polypeptide: Replicase polyprotein 1ab (7059 aa).

The 143-residue stretch at 54 to 196 (PENHVMVDCR…PWVMYLRKCG (143 aa)) folds into the CoV Nsp1 globular domain. In terms of domain architecture, BetaCoV Nsp1 C-terminal spans 216–246 (FKVEDAYDLVHDEPKGKFSKKAYALIRGYRG). Positions 250-519 (LLYVDQYGCD…LICKALYLDY (270 aa)) constitute a CoV Nsp2 N-terminal domain. The Zn(2+) site is built by cysteine 392, cysteine 397, cysteine 413, and cysteine 416. The tract at residues 392-416 (CEQDLCDFKGWVPGNMIDGFACTTC) is C4. The region spanning 524–713 (CGNLHQRELL…AQAFRSGAKV (190 aa)) is the CoV Nsp2 middle domain. The 119-residue stretch at 733–851 (RRRICLSGSK…LDQAWRVPCA (119 aa)) folds into the CoV Nsp2 C-terminal domain. One can recognise a Ubiquitin-like 1 domain in the interval 853 to 966 (RCVTFKEQPT…LYCAFTAPED (114 aa)). Over residues 972 to 986 (ESGVEEDDVEGEETD) the composition is skewed to acidic residues. The tract at residues 972–1000 (ESGVEEDDVEGEETDLTVTSAGEPCVASE) is disordered. In terms of domain architecture, Peptidase C16 1 spans 1036–1274 (DLESVIQDYE…IAQLYGSCIT (239 aa)). Cysteine 1074 serves as the catalytic For PL1-PRO activity. The Zn(2+) site is built by cysteine 1151, cysteine 1154, cysteine 1177, and cysteine 1179. A C4-type 1 zinc finger spans residues 1151–1179 (CIKCDLALKLKGLDAMFFYGDVVSHVCKC). Active-site for PL1-PRO activity residues include histidine 1225 and aspartate 1236. Positions 1275–1435 (PNVCFVKGDI…LISKCQITAV (161 aa)) constitute a Macro domain. The DPUP domain maps to 1491-1563 (DDARTFVQSN…VAQIKALFLD (73 aa)). The 56-residue stretch at 1562–1617 (LDKVDILLTVDGVNFTNRFVPVGESFGKSLGNVFCDGVNVTKHKCDINYKGKVFFQ) folds into the Ubiquitin-like 2 domain. In terms of domain architecture, Peptidase C16 2 spans 1631-1892 (SSFNFDQKEL…KIEYKPDLSQ (262 aa)). Residue cysteine 1671 is the For PL2-PRO activity of the active site. Residues cysteine 1749, cysteine 1751, cysteine 1783, and cysteine 1785 each contribute to the Zn(2+) site. A C4-type 2 zinc finger spans residues 1749-1785 (CKCGVKQEQRTGVDAVMHFGTLSREDLEIGYTVDCSC). Residues histidine 1828 and aspartate 1842 each act as for PL2-PRO activity in the active site. The Nucleic acid-binding domain maps to 1906–2007 (IKAQFKTFEK…TYFNRPLLVD (102 aa)). A G2M domain is found at 2020-2169 (DDGGDISESD…ADNKVIYTTE (150 aa)). Transmembrane regions (helical) follow at residues 2138–2158 (ISAC…WIKI), 2199–2219 (ACII…NVIF), and 2221–2241 (DFYL…VQWI). An HD1 region spans residues 2138–2385 (ISACFNFIKW…ASFIKLFSLF (248 aa)). The region spanning 2235–2296 (GKIVQWIKNT…AIDVVQYEAD (62 aa)) is the 3Ecto domain. Intrachain disulfides connect cysteine 2251-cysteine 2275 and cysteine 2266-cysteine 2272. The next 3 membrane-spanning stretches (helical) occupy residues 2313-2333 (LIVS…LISI), 2343-2363 (LLML…ANML), and 2365-2385 (AHVF…FSLF). Positions 2383–2473 (SLFRHVAYGC…ELKRPIQPTD (91 aa)) are Y1. In terms of domain architecture, CoV Nsp3 Y spans 2383 to 2750 (SLFRHVAYGC…LTTPFSLKGG (368 aa)). Histidine 2387, cysteine 2392, cysteine 2397, cysteine 2400, cysteine 2433, histidine 2436, cysteine 2440, and cysteine 2443 together coordinate Zn(2+). The interval 2387 to 2400 (HVAYGCSKSGCLFC) is ZF1. Positions 2433–2443 (CSKHQWNCIDC) are ZF2. Residues 2474–2566 (VAYHTVTDVK…MVDKILITTA (93 aa)) form a Y2 region. A coV-Y region spans residues 2474-2750 (VAYHTVTDVK…LTTPFSLKGG (277 aa)). Residues 2567–2649 (NTGTSVTETM…DSVMSAVSAG (83 aa)) form a Y3 region. Residues 2650–2750 (LELTDESCNN…LTTPFSLKGG (101 aa)) form a Y4 region. Helical transmembrane passes span 2752 to 2772 (VFSY…IGLW), 2824 to 2844 (STFG…VAVV), 3009 to 3029 (VFDL…FLAL), 3031 to 3051 (ASSI…YYLI), 3063 to 3083 (IVFV…VFQV), 3090 to 3110 (VYAI…SVIM), and 3115 to 3135 (LVMY…SVVV). Residues 2752–3135 (VFSYFVYVCF…FCLLYISVVV (384 aa)) are HD2. A Nsp4C domain is found at 3149–3246 (LGTSVRSDGT…TASVSTSFLQ (98 aa)). Residues 3247–3549 (SGIVKMVNPT…YQQLAGIKLQ (303 aa)) enclose the Peptidase C30 domain. Catalysis depends on for 3CL-PRO activity residues histidine 3287 and cysteine 3391. Positions 3319–3775 (LSLTVMSYQM…IISCYWGLFS (457 aa)) are HD3. 7 consecutive transmembrane segments (helical) span residues 3558 to 3578 (GIVC…TAFV), 3588 to 3608 (TNML…MLLV), 3615 to 3635 (LTMY…LVVY), 3657 to 3677 (TYTD…FVTL), 3684 to 3704 (LFSF…WYMG), 3711 to 3731 (ILLM…LSMA), and 3755 to 3775 (IVLV…GLFS). One can recognise a RdRp Nsp7 cofactor domain in the interval 3837-3925 (SKLTDVKCAN…DYAKDNTVLQ (89 aa)). In terms of domain architecture, RdRp Nsp8 cofactor spans 3926–4122 (ALQSEFVNMA…HNEVSATVLQ (197 aa)). The region spanning 4123 to 4232 (NNELMPAKLK…GTISSTVRLQ (110 aa)) is the Nsp9 ssRNA-binding domain. Positions 4233–4370 (AGTATEYASN…CVSTDTTVQS (138 aa)) constitute an ExoN/MTase coactivator domain. Positions 4306, 4309, 4315, 4322, 4348, 4351, 4359, and 4361 each coordinate Zn(2+). Zinc fingers lie at residues 4306–4322 (CIYC…DGLC) and 4348–4361 (CQVC…SCSC). One can recognise a NiRAN domain in the interval 4375 to 4630 (FLNRVRGTSV…DCELYVNNAY (256 aa)). Residues asparagine 4578 and aspartate 4587 each coordinate Mn(2+). A Nsp12 Interface domain is found at 4631-4729 (RLFDLVQYDF…MNMDVDTHRY (99 aa)). Zn(2+) contacts are provided by histidine 4660, cysteine 4666, cysteine 4671, cysteine 4675, and cysteine 4852. The Nsp12 RNA-dependent RNA polymerase domain maps to 4730–5297 (RLSLKDLLLY…NMYLRSAVMQ (568 aa)). Residues 4732–4946 (SLKDLLLYAA…HQKCLKSIAA (215 aa)) form a rdRp Fingers N-ter region. Residues 4947 to 4985 (TRGVPVVIGTTKFYGGWDDMLRRLIKDVDNPVLMGWDYP) are rdRp Palm N-ter. The RdRp catalytic domain maps to 4977 to 5139 (PVLMGWDYPK…CYNSDYASKG (163 aa)). The segment at 4986–5044 (KCDRAMPNILRIVSSLVLARKHEACCSQSDRFYRLANECAQVLSEIVMCGGCYYVKPGG) is rdRp Fingers C-ter. Positions 5007, 5010, and 5011 each coordinate Zn(2+). The rdRp Palm C-ter stretch occupies residues 5045–5180 (TSSGDATTAF…NNGPHEFCSQ (136 aa)). Catalysis depends on residues serine 5124, aspartate 5125, and aspartate 5126. Residues 5181–5297 (HTMLVKMDGD…NMYLRSAVMQ (117 aa)) form a rdRp Thumb region. Residues 5298 to 5410 (SVGACVVCSS…DDFNRIASCK (113 aa)) enclose the CV ZBD domain. Zn(2+) contacts are provided by cysteine 5302, cysteine 5305, cysteine 5313, cysteine 5316, cysteine 5323, cysteine 5326, histidine 5330, histidine 5336, cysteine 5347, cysteine 5352, cysteine 5369, and histidine 5372. In terms of domain architecture, (+)RNA virus helicase ATP-binding spans 5553–5734 (SVLETFQNNV…MCCLGPDIFL (182 aa)). Position 5578 to 5585 (5578 to 5585 (GPPGTGKS)) interacts with ATP. The (+)RNA virus helicase C-terminal domain maps to 5735–5904 (GTCYRCPKEI…VETRVQCSTN (170 aa)). Residues 5971 to 6186 (LFITKEEAVK…RCLAVYDCFC (216 aa)) enclose the ExoN domain. Catalysis depends on residues aspartate 5989, glutamate 5991, and glutamate 6090. Zn(2+) contacts are provided by histidine 6156, cysteine 6160, and histidine 6163. Residues histidine 6167 and aspartate 6172 contribute to the active site. Residue cysteine 6178 participates in Zn(2+) binding. In terms of domain architecture, N7-MTase spans 6195–6421 (YPIISNELSI…NLWNTFTKLQ (227 aa)). Residue 6230-6236 (DIGNPKA) participates in S-adenosyl-L-methionine binding. The interval 6308 to 6322 (CNGGSLYVNKHAFHT) is gpppA-binding. Zn(2+) is bound by residues cysteine 6346, cysteine 6367, cysteine 6378, and histidine 6381. The 61-residue stretch at 6422-6482 (SLENVVYNLV…NVAVELFAKR (61 aa)) folds into the Nsp15 N-terminal oligomerization domain. The AV-Nsp11N/CoV-Nsp15M domain maps to 6483-6603 (SIRHHPELKL…FAVRKEGQDV (121 aa)). In terms of domain architecture, NendoU spans 6653 to 6792 (TCRTDMEKDF…NDEKVMTFYP (140 aa)). Active-site residues include histidine 6683, histidine 6698, lysine 6738, lysine 6841, aspartate 6935, lysine 6971, and glutamate 7004. In terms of domain architecture, Nidovirus-type SAM-dependent 2'-O-MTase spans 6797–7059 (ASDWKPGYSM…NSRLSWLVMP (263 aa)).

Belongs to the coronaviruses polyprotein 1ab family. In terms of assembly, interacts with host PHB and PHB2. As to quaternary structure, interacts with papain-like protease nsp3 and non-structural protein 6. Monomer. Homodimer. Only the homodimer shows catalytic activity. In terms of assembly, interacts with nsp8 and nsp12 to form the replication-transcription complex (RTC): nsp12, nsp7, two subunits of nsp8, and up to two subunits of nsp13. As to quaternary structure, interacts with nsp7, nsp13 and nsp12 to form the replication-transcription complex (RTC): nsp12, nsp7, two subunits of nsp8, and up to two subunits of nsp13. Interacts with nsp12. In terms of assembly, interacts with proofreading exoribonuclease nsp14 and 2'-O-methyltransferase nsp16; these interactions enhance nsp14 and nsp16 enzymatic activities. As to quaternary structure, interacts with nsp7 and nsp8 to form the replication-transcription complex (RTC): nsp12, nsp7, two subunits of nsp8, and up to two subunits of nsp13. Interacts with nsp9. Interacts with nsp8 to form the replication-transcription complex (RTC): nsp12, nsp7, two subunits of nsp8, and up to two subunits of nsp13. It depends on Mn(2+) as a cofactor. The cofactor is Mg(2+). In terms of processing, specific enzymatic cleavages in vivo by its own proteases yield mature proteins. 3CL-PRO and PL-PRO proteinases are autocatalytically processed.

Its subcellular location is the host membrane. The protein localises to the host cytoplasm. It localises to the host perinuclear region. It is found in the host endoplasmic reticulum-Golgi intermediate compartment. It catalyses the reaction RNA(n) + a ribonucleoside 5'-triphosphate = RNA(n+1) + diphosphate. The catalysed reaction is ATP + H2O = ADP + phosphate + H(+). The enzyme catalyses Thiol-dependent hydrolysis of ester, thioester, amide, peptide and isopeptide bonds formed by the C-terminal Gly of ubiquitin (a 76-residue protein attached to proteins as an intracellular targeting signal).. It carries out the reaction a 5'-end (N(7)-methyl 5'-triphosphoguanosine)-ribonucleoside in mRNA + S-adenosyl-L-methionine = a 5'-end (N(7)-methyl 5'-triphosphoguanosine)-(2'-O-methyl-ribonucleoside) in mRNA + S-adenosyl-L-homocysteine + H(+). It catalyses the reaction uridylyl-uridylyl-ribonucleotide-RNA = a 3'-end uridylyl-2',3'-cyclophospho-uridine-RNA + a 5'-end dephospho-ribonucleoside-RNA. The catalysed reaction is a 5'-end diphospho-ribonucleoside in mRNA + GTP + H(+) = a 5'-end (5'-triphosphoguanosine)-ribonucleoside in mRNA + diphosphate. The enzyme catalyses a 5'-end (5'-triphosphoguanosine)-ribonucleoside in mRNA + S-adenosyl-L-methionine = a 5'-end (N(7)-methyl 5'-triphosphoguanosine)-ribonucleoside in mRNA + S-adenosyl-L-homocysteine. In terms of biological role, the replicase polyprotein of coronaviruses is a multifunctional protein: it contains the activities necessary for the transcription of negative stranded RNA, leader RNA, subgenomic mRNAs and progeny virion RNA as well as proteinases responsible for the cleavage of the polyprotein into functional products. Inhibits host translation by interacting with the 40S ribosomal subunit. The nsp1-40S ribosome complex further induces an endonucleolytic cleavage near the 5'UTR of host mRNAs, targeting them for degradation. Viral mRNAs are not susceptible to nsp1-mediated endonucleolytic RNA cleavage thanks to the presence of a 5'-end leader sequence and are therefore protected from degradation. By suppressing host gene expression, nsp1 facilitates efficient viral gene expression in infected cells and evasion from host immune response. Its function is as follows. May play a role in the modulation of host cell survival signaling pathway by interacting with host PHB and PHB2. Indeed, these two proteins play a role in maintaining the functional integrity of the mitochondria and protecting cells from various stresses. Functionally, responsible for the cleavages located at the N-terminus of the replicase polyprotein. In addition, PL-PRO possesses a deubiquitinating/deISGylating activity and processes both 'Lys-48'- and 'Lys-63'-linked polyubiquitin chains from cellular substrates. Participates together with nsp4 in the assembly of virally-induced cytoplasmic double-membrane vesicles necessary for viral replication. Antagonizes innate immune induction of type I interferon by blocking the phosphorylation, dimerization and subsequent nuclear translocation of host IRF3. Also prevents host NF-kappa-B signaling. In terms of biological role, participates in the assembly of virally-induced cytoplasmic double-membrane vesicles necessary for viral replication. Cleaves the C-terminus of replicase polyprotein at 11 sites. Recognizes substrates containing the core sequence [ILMVF]-Q-|-[SGACN]. Also able to bind an ADP-ribose-1''-phosphate (ADRP). Its function is as follows. Plays a role in the initial induction of autophagosomes from host endoplasmic reticulum. Later, limits the expansion of these phagosomes that are no longer able to deliver viral components to lysosomes. Functionally, forms a hexadecamer with nsp8 (8 subunits of each) that may participate in viral replication by acting as a primase. Alternatively, may synthesize substantially longer products than oligonucleotide primers. In terms of biological role, forms a hexadecamer with nsp7 (8 subunits of each) that may participate in viral replication by acting as a primase. Alternatively, may synthesize substantially longer products than oligonucleotide primers. Forms a primer, NSP9-pU, which is utilized by the polymerase for the initiation of RNA chains. Interacts with ribosome signal recognition particle RNA (SRP). Together with NSP8, suppress protein integration into the cell membrane, thereby disrupting host immune defenses. Its function is as follows. Plays a pivotal role in viral transcription by stimulating both nsp14 3'-5' exoribonuclease and nsp16 2'-O-methyltransferase activities. Therefore plays an essential role in viral mRNAs cap methylation. Functionally, RNA-directed RNA polymerase that catalyzes the transcription of viral genomic and subgenomic RNAs. Acts in complex with nsp7 and nsp8 to transcribe both the minus and positive strands of genomic RNA. The kinase-like NiRAN domain of NSP12 attaches one or more nucleotides to the amino terminus of NSP9, forming a covalent RNA-protein intermediate that serves as transcription/replication primer. Subgenomic RNAs (sgRNAs) are formed by discontinuous transcription: The polymerase has the ability to pause at transcription-regulating sequences (TRS) and jump to the leader TRS, resulting in a major deletion. This creates a series of subgenomic RNAs that are replicated, transcribed and translated. In addition, Nsp12 is a subunit of the viral RNA capping enzyme that catalyzes the RNA guanylyltransferase reaction for genomic and sub-genomic RNAs. Subsequently, the NiRAN domain transfers RNA to GDP, and forms the core cap structure GpppA-RNA. In terms of biological role, multi-functional protein with a zinc-binding domain in N-terminus displaying RNA and DNA duplex-unwinding activities with 5' to 3' polarity. Activity of helicase is dependent on magnesium. Plays a role in viral RNA synthesis through two distinct activities. The N7-guanine methyltransferase activity plays a role in the formation of the cap structure GpppA-RNA. The proofreading exoribonuclease reduces the sensitivity of the virus to RNA mutagens during replication. This activity acts on both ssRNA and dsRNA in a 3'-5' direction. Its function is as follows. Plays a role in viral transcription/replication and prevents the simultaneous activation of host cell dsRNA sensors, such as MDA5/IFIH1, OAS, and PKR. Acts by degrading the 5'-polyuridines generated during replication of the poly(A) region of viral genomic and subgenomic RNAs. Catalyzes a two-step reaction in which a 2'3'-cyclic phosphate (2'3'-cP) is first generated by 2'-O transesterification, which is then hydrolyzed to a 3'-phosphate (3'-P). If not degraded, poly(U) RNA would hybridize with poly(A) RNA tails and activate host dsRNA sensors. Functionally, methyltransferase that mediates mRNA cap 2'-O-ribose methylation to the 5'-cap structure of viral mRNAs. N7-methyl guanosine cap is a prerequisite for binding of nsp16. Therefore plays an essential role in viral mRNAs cap methylation which is essential to evade immune system. This Bos taurus (Bovine) protein is Replicase polyprotein 1ab (rep).